A 214-amino-acid polypeptide reads, in one-letter code: tRNA (guanine-N(7)-)-methyltransferase (214 aa).

Residues Glu-43, Glu-68, Asp-95, and Asp-117 each contribute to the S-adenosyl-L-methionine site. Asp-117 is a catalytic residue. Substrate is bound by residues Lys-121, Asp-153, and 190–193 (TEYE).

This sequence belongs to the class I-like SAM-binding methyltransferase superfamily. TrmB family.

The enzyme catalyses guanosine(46) in tRNA + S-adenosyl-L-methionine = N(7)-methylguanosine(46) in tRNA + S-adenosyl-L-homocysteine. It participates in tRNA modification; N(7)-methylguanine-tRNA biosynthesis. Functionally, catalyzes the formation of N(7)-methylguanine at position 46 (m7G46) in tRNA. In Staphylococcus aureus (strain COL), this protein is tRNA (guanine-N(7)-)-methyltransferase.